Here is a 350-residue protein sequence, read N- to C-terminus: Quercetin 2,3-dioxygenase (350 aa).

The cupin 1 stretch occupies residues Asp1–Asp145. Residues His66, His68, and Glu73 each contribute to the Cu cation site. His66 is a binding site for substrate. Residue Glu73 participates in substrate binding. Asn90 and Asn109 each carry an N-linked (GlcNAc...) asparagine glycan. His112 contacts Cu cation. Asn142 carries an N-linked (GlcNAc...) asparagine glycan. The tract at residues Thr146–Asn205 is linker. Residues His148–Ser167 form a disordered region. The span at Ile152–Ser167 shows a compositional bias: low complexity. Residues Asn191 and Asn248 are each glycosylated (N-linked (GlcNAc...) asparagine). The interval Ala206–Trp350 is cupin 2.

Homodimer. Cu cation is required as a cofactor. In terms of processing, the N-linked glycan at Asn-191 consists of Man(5)-GlcNAc(2).

The enzyme catalyses quercetin + O2 = 2-(3,4-dihydroxybenzoyloxy)-4,6-dihydroxybenzoate + CO. Its pathway is flavonoid metabolism; quercetin degradation. Its activity is regulated as follows. Inhibited by diethyldithiocarbamate and kojic acid. Its function is as follows. Performs the first step in the degradation of the flavonoid quercetin by a dioxygenase reaction. The enzyme catalyzes the cleavage of the O-heteroaromatic ring of the flavonol quercetin yielding the depside 2-protocatechuoyl-phloroglucinol carboxylic acid and carbon monoxide. This involves the remarkable dioxygenolytic cleavage of two carbon-carbon bonds. The chain is Quercetin 2,3-dioxygenase from Aspergillus japonicus.